The primary structure comprises 356 residues: HTH-type transcriptional regulator AglR (356 aa).

The region spanning M1 to T57 is the HTH lacI-type domain. The segment at residues L5–N24 is a DNA-binding region (H-T-H motif). The segment at T337–A356 is disordered.

Functionally, probable regulatory protein for the binding-protein-dependent transport system for alpha-glucosides such as sucrose, maltose and trehalose. In Rhizobium meliloti (strain 1021) (Ensifer meliloti), this protein is HTH-type transcriptional regulator AglR (aglR).